We begin with the raw amino-acid sequence, 1460 residues long: MGRYSVSPVPKCLLLMFLGWSGLKYYQVNAAQLREYHIAAQLEDWDYNPQPEELSRLSESDLTFKKIVYREYELDFKQEEPRDALSGLLGPTLRGEVGDSLIIYFKNFATQPVSIHPQSAVYNKWSEGSSYSDGTSDVERLDDAVPPGQSFKYVWNITAEIGPKKADPPCLTYAYYSHVNMVRDFNSGLIGALLICKEGSLNANGSQKFFNREYVLMFSVFDESKNWYRKPSLQYTINGFANGTLPDVQACAYDHISWHLIGMSSSPEIFSVHFNGQTLEQNHYKVSTINLVGGASVTADMSVSRTGKWLISSLVAKHLQAGMYGYLNIKDCGNPDTLTRKLSFRELMKIKNWEYFIAAEEITWDYAPEIPSSVDRRYKAQYLDNFSNFIGKKYKKAVFRQYEDGNFTKPTYAIWPKERGILGPVIKAKVRDTVTIVFKNLASRPYSIYVHGVSVSKDAEGAIYPSDPKENITHGKAVEPGQVYTYKWTVLDTDEPTVKDSECITKLYHSAVDMTRDIASGLIGPLLVCKHKALSVKGVQNKADVEQHAVFAVFDENKSWYLEDNIKKYCSNPSAVKKDDPKFYKSNVMYTLNGYASDRTEVLRFHQSEVVQWHLTSVGTVDEIVPVHLSGHTFLSKGKHQDILNLFPMSGESATVTMDNLGTWLLSSWGSCEMSNGMRLRFLDANYDDEDEGNEEEEEDDGDIFADIFIPSEVVKKKEEVPVNFVPDPESDALAKELGLIDDEGNPIIQPRREQTEDDEEQLMKASMLGLRSFKGSVAEEELKHTALALEEDAHASDPRIDSNSARNPDDIAGRYLRTINRGNKRRYYIAAEEVLWDYSPIGKSQVRSRAAKTTFKKAIFRSYLDDTFQTPSTGGEYEKHLGILGPIIRAEVDDVIEIQFKNLASRPYSLHAHGLLYEKSSEGRSYDDKSPELFKKDDAIMPNGTYTYVWQVPPRSGPTDNTEKCKSWAYYSGVNPEKDIHSGLIGPILICQKGMIDKYNRTIDIREFVLFFMVFDEEKSWYFPKSDKSTCEEKLIGVQSLHTFPAINGIPYQLQGLTMYKDENVHWHLLNMGGPKDIHVVNFHGQTFTEEGREDNQLGVLPLLPGTFASIKMKPSKIGTWLLETEVGENQERGMQALFTVIDKDCKLPMGLASGIIQDSQISASGHVGYWEPKLARLNNTGKYNAWSIIKKEHEHPWIQIDLQRQVVITGIQTQGTVQLLQHSYTVEYFVTYSEDGQNWITFKGRHSETQMHFEGNSDGTTVKENHIDPPIIARYIRLHPTKFYNRPTFRIELLGCEVEGCSVPLGMESGAIKNSEITASSYKKTWWSSWEPSLARLNLEGGTNAWQPEVNNKDQWLQIDLQHLTKITSIITQGATSMTTSMYVKTFSIHYTDDNSTWKPYLDVRTSMEKVFTGNINSDGHVKHFFKPPILSRFIRIIPKTWNQYIALRIELFGCEVF.

The N-terminal stretch at 1–30 (MGRYSVSPVPKCLLLMFLGWSGLKYYQVNA) is a signal peptide. A Plastocyanin-like 1 domain is found at 32–196 (QLREYHIAAQ…SGLIGALLIC (165 aa)). F5/8 type A domains lie at 32-330 (QLRE…LNIK) and 351-685 (KNWE…FLDA). Residues lysine 124, glutamate 139, aspartate 142, and aspartate 143 each coordinate Ca(2+). Asparagine 156 carries an N-linked (GlcNAc...) asparagine glycan. Cysteine 170 and cysteine 196 form a disulfide bridge. N-linked (GlcNAc...) asparagine glycans are attached at residues asparagine 204 and asparagine 242. Plastocyanin-like domains follow at residues 206-330 (SQKF…LNIK), 351-529 (KNWE…LLVC), and 539-685 (VQNK…FLDA). Residues cysteine 251 and cysteine 332 are joined by a disulfide bond. 2 N-linked (GlcNAc...) asparagine glycosylation sites follow: asparagine 406 and asparagine 471. Cysteine 503 and cysteine 529 are joined by a disulfide. Asparagine 557 is a glycosylation site (N-linked (GlcNAc...) asparagine). 4 cysteine pairs are disulfide-bonded: cysteine 672–cysteine 1032, cysteine 966–cysteine 992, cysteine 1147–cysteine 1298, and cysteine 1303–cysteine 1457. Residues 693–818 (GNEEEEEDDG…PDDIAGRYLR (126 aa)) are b. The propeptide at 773-818 (SFKGSVAEEELKHTALALEEDAHASDPRIDSNSARNPDDIAGRYLR) is activation peptide (connecting region). Plastocyanin-like domains follow at residues 824–992 (NKRR…ILIC) and 1001–1143 (NRTI…FTVI). The region spanning 824–1143 (NKRRYYIAAE…RGMQALFTVI (320 aa)) is the F5/8 type A 3 domain. Ca(2+)-binding residues include lysine 920, phenylalanine 935, aspartate 938, and aspartate 939. Asparagine 944 carries an N-linked (GlcNAc...) asparagine glycan. 2 N-linked (GlcNAc...) asparagine glycosylation sites follow: asparagine 1001 and asparagine 1180. F5/8 type C domains follow at residues 1147–1298 (CKLP…LLGC) and 1303–1457 (CSVP…LFGC).

It belongs to the multicopper oxidase family. In terms of assembly, heterodimer of a light and a heavy chains; non-disulfide-linked. The interaction between the two chains is calcium-dependent. Found in its active form associated with pseutarin-C catalytic subunit (AC Q56VR3). Post-translationally, in physiological conditions, blood coagulation factor V and factor Va are inactivated by activated protein C (APC) through proteolytic degradation of the heavy chain. However, pseutarin-C non-catalytic subunit (factor V-like protein) retains its full activity even at high concentration of APC. This has two explanations: this protein has only one of the three cleavage sites present in factor V that are targeted by the APC for inactivation, and the binding with the catalytic subunit protect the cleavage site from inactivation. Expressed by the venom gland.

It localises to the secreted. Its function is as follows. Snake prothrombin activator that attacks the hemostatic system of prey. This non-catalytic subunit is functionally similar to blood coagulation factor V. It serves as a critical cofactor for the prothrombinase activity of the catalytic subunit, which is similar to the blood coagulation factor X. The complex converts prothrombin to thrombin by sequential cleavage at two positions, Arg-320 followed by Arg-271. Cleavage at Arg-320 produces an active intermediate known as meizothrombin. Meizothrombin is the 'second' substrate for prothrombinase, and it docks in an altered manner to present the second cleavage site (271). Cleavage at Arg-271 releases active thrombin from its pro-fragment. This order of events is reversed if the protease component of prothrombinase is used on its own, suggesting that the 271 site is inherently more accessible to proteolysis. The complex converts prothrombin to thrombin in presence but also in the absence of membrane. The polypeptide is Venom prothrombin activator pseutarin-C non-catalytic subunit (Pseudonaja textilis (Eastern brown snake)).